We begin with the raw amino-acid sequence, 346 residues long: NADH-quinone oxidoreductase subunit H 2 (346 aa).

Helical transmembrane passes span 14 to 34, 83 to 103, 136 to 156, 172 to 192, 208 to 228, 260 to 280, 289 to 309, and 324 to 344; these read IAMV…VAYA, FAFL…FAVI, VGVL…VLAG, SAQM…VFML, GAWY…CSIA, FFMA…TLFL, LPGW…CMWI, and LGWK…GIIV.

It belongs to the complex I subunit 1 family. As to quaternary structure, NDH-1 is composed of 14 different subunits. Subunits NuoA, H, J, K, L, M, N constitute the membrane sector of the complex.

It localises to the cell inner membrane. The enzyme catalyses a quinone + NADH + 5 H(+)(in) = a quinol + NAD(+) + 4 H(+)(out). NDH-1 shuttles electrons from NADH, via FMN and iron-sulfur (Fe-S) centers, to quinones in the respiratory chain. The immediate electron acceptor for the enzyme in this species is believed to be ubiquinone. Couples the redox reaction to proton translocation (for every two electrons transferred, four hydrogen ions are translocated across the cytoplasmic membrane), and thus conserves the redox energy in a proton gradient. This subunit may bind ubiquinone. This Geobacter metallireducens (strain ATCC 53774 / DSM 7210 / GS-15) protein is NADH-quinone oxidoreductase subunit H 2.